A 98-amino-acid chain; its full sequence is Tan_12Cys (98 aa).

An N-terminal signal peptide occupies residues 1–21 (MNLKVLFLLAMVLVTLCLGED). The propeptide occupies 22–28 (RVTDRRK).

Belongs to the teretoxin C (TC) superfamily. Contains 6 disulfide bonds. Expressed by the venom duct.

It is found in the secreted. The protein is Tan_12Cys of Terebra anilis (Auger snail).